The chain runs to 520 residues: MENIEKLLMQEKILMLELDLVKAKISLARANGSSQQGELSLHRETPEKEEAVHSALATFTPTQVKAIPEQTAPGKESTNPLMASILPKDMNSVQTEIRLKRPSDFLRPYQGISIPQKSELNSTVTLHGVESGIQHPHINYYVVYNGPHAGIYDDWGCTKAATNGVPGVAQKKFATITEARAAADAYTTSQQTDRLNFIPKGEAQLKPKSFAKALTSPSKQKAHWLTLGTKRPSSDPAPKEISFAPEITMDDFLYLYDLGRKFDGEGDDTMFTTDNEKISLFNFRKNADPQMVREAYAAGLIKTIYPSNNLQEIKYLPKKVKDAVKRFRTNCIKNTEKDIFLKIRSTIPVWTIQGLLHKPRQVIEIGVSKKVVPTESKAMESKIQIEDLTELAVKTGEQFIQSLLRLNDKKKIFVNMVEHDTLVYSKNIKDTVSEDQRAIETFQQRVISGNLLGFHCPAICHFIERTVEKEGGTYKCHHCDKGKAIIQDASTDSGPKDGPPPTRSIVEKEDVPTTSSKQVD.

Disordered regions lie at residues 32–51 (GSSQQGELSLHRETPEKEEA) and 487–520 (QDASTDSGPKDGPPPTRSIVEKEDVPTTSSKQVD). Residues 40–51 (SLHRETPEKEEA) show a composition bias toward basic and acidic residues.

It belongs to the caulimoviridae viroplasmin family.

The protein resides in the host cytoplasm. Functionally, enhances the ribosomal termination-reinitiation event leading to the translation of major open reading frames on the polycistronic viral RNAs. The chain is Transactivator/viroplasmin protein from Arabidopsis thaliana (Mouse-ear cress).